The primary structure comprises 286 residues: Beta-glucanase (286 aa).

The first 30 residues, 1-30 (MCTMPLMKLKKMMRRTAFLLSVLIGCSMLG), serve as a signal peptide directing secretion. The 239-residue stretch at 48–286 (FDYSGLPDPE…DYVRVYRWVE (239 aa)) folds into the GH16 domain. The active-site Nucleophile is the E158. The Proton donor role is filled by E163.

This sequence belongs to the glycosyl hydrolase 16 family.

It catalyses the reaction Hydrolysis of (1-&gt;4)-beta-D-glucosidic linkages in beta-D-glucans containing (1-&gt;3)- and (1-&gt;4)-bonds.. In terms of biological role, shows activity on lichenan, beta-glucan and laminarin but not on CMC cellulose or xylan. The chain is Beta-glucanase (bglA) from Rhodothermus marinus (Rhodothermus obamensis).